Consider the following 607-residue polypeptide: Arginine--tRNA ligase (607 aa).

The 'HIGH' region motif lies at 147–157; the sequence is PNIAKEMHVGH.

The protein belongs to the class-I aminoacyl-tRNA synthetase family. As to quaternary structure, monomer.

Its subcellular location is the cytoplasm. The catalysed reaction is tRNA(Arg) + L-arginine + ATP = L-arginyl-tRNA(Arg) + AMP + diphosphate. The chain is Arginine--tRNA ligase from Prochlorococcus marinus (strain NATL2A).